A 293-amino-acid polypeptide reads, in one-letter code: 33 kDa chaperonin (293 aa).

2 disulfides stabilise this stretch: cysteine 238-cysteine 240 and cysteine 271-cysteine 274.

It belongs to the HSP33 family. Under oxidizing conditions two disulfide bonds are formed involving the reactive cysteines. Under reducing conditions zinc is bound to the reactive cysteines and the protein is inactive.

The protein localises to the cytoplasm. Redox regulated molecular chaperone. Protects both thermally unfolding and oxidatively damaged proteins from irreversible aggregation. Plays an important role in the bacterial defense system toward oxidative stress. The sequence is that of 33 kDa chaperonin from Clostridium beijerinckii (strain ATCC 51743 / NCIMB 8052) (Clostridium acetobutylicum).